A 464-amino-acid chain; its full sequence is Kynureninase (464 aa).

Residue Met-1 is modified to N-acetylmethionine. Pyridoxal 5'-phosphate-binding positions include Leu-137, Thr-138, 165-168 (FPSD), Ser-221, Asp-250, His-253, and Tyr-275. The residue at position 276 (Lys-276) is an N6-(pyridoxal phosphate)lysine. Positions 305 and 333 each coordinate pyridoxal 5'-phosphate.

The protein belongs to the kynureninase family. Homodimer. Pyridoxal 5'-phosphate serves as cofactor.

It is found in the cytoplasm. The protein localises to the cytosol. The enzyme catalyses L-kynurenine + H2O = anthranilate + L-alanine + H(+). It carries out the reaction 3-hydroxy-L-kynurenine + H2O = 3-hydroxyanthranilate + L-alanine + H(+). Its pathway is amino-acid degradation; L-kynurenine degradation; L-alanine and anthranilate from L-kynurenine: step 1/1. It functions in the pathway cofactor biosynthesis; NAD(+) biosynthesis; quinolinate from L-kynurenine: step 2/3. Catalyzes the cleavage of L-kynurenine (L-Kyn) and L-3-hydroxykynurenine (L-3OHKyn) into anthranilic acid (AA) and 3-hydroxyanthranilic acid (3-OHAA), respectively. Has a preference for the L-3-hydroxy form. Also has cysteine-conjugate-beta-lyase activity. In Mus musculus (Mouse), this protein is Kynureninase (Kynu).